Reading from the N-terminus, the 770-residue chain is Transducin-like enhancer protein 1 (770 aa).

Residues 1–131 form a q domain region; it reads MFPQSRHPTP…IIGQQQLQAQ (131 aa). Disordered regions lie at residues 128-157 and 176-348; these read LQAQHLSHGHGPPVPLTPHPSGLQPPGIPP and HLAI…PAID. The segment at 132–199 is GP domain; sequence HLSHGHGPPV…HHRDREPGTS (68 aa). Composition is skewed to basic and acidic residues over residues 178 to 196 and 209 to 246; these read AIKDDKKHHDAEHHRDREP and RGTDKRRNGPEFSNDIKKRKVDDKDSSHYDSDGDKSDD. Residues 200-268 form a ccN domain region; the sequence is NSLLVPDSLR…SPRASPAHSP (69 aa). Residues 225-228 carry the Nuclear localization signal motif; it reads KKRK. Ser239 is subject to Phosphoserine. The segment covering 257–266 has biased composition (low complexity); it reads PSSPRASPAH. Ser259, Ser263, and Ser267 each carry phosphoserine; by CDK1. The segment covering 267-283 has biased composition (basic and acidic residues); sequence SPRENGIDKNRLLKKDA. Residues 269–450 form an SP domain region; it reads RENGIDKNRL…GGKPAYSFHV (182 aa). Positions 284–298 are enriched in low complexity; that stretch reads SSSPASTASSASSTS. Ser286 carries the phosphoserine modification. A compositionally biased stretch (basic and acidic residues) spans 300 to 310; the sequence is KSKEMSLHEKA. WD repeat units follow at residues 470–501, 528–558, 572–602, 614–644, 696–726, and 737–767; these read GIPRHARQINTLNHGEVVCAVTISNPTRHVYT, NRDNYIRSCKLLPDGCTLIVGGEASTLSIWD, SSAPACYALAISPDSKVCFSCCSDGNIAVWD, GHTDGASCIDISNDGTKLWTGGLDNTVRSWD, LHESCVLSLKFAYCGKWFVSTGKDNLLNAWR, and KESSSVLSCDISVDDKYIVTGSGDKKATVYE.

Belongs to the WD repeat Groucho/TLE family. As to quaternary structure, homooligomer and heterooligomer with other family members. Binds RUNX1, RUNX3, FOXA2, KDM6A, UTY, histone H3, HESX1, ESRRG and the NF-kappa-B subunit RELA. Interacts with HES1 (via WRPW motif). Binds TCF7, LEF1, TCF7L1 and TCF7L2. Interacts with SIX3. Interacts with EFNB1. Interacts with TLE4. Interacts with FOXG1/BF-1; the interaction is inhibited by TLE6/GRG6. In terms of processing, phosphorylated, probably by CDK1. The degree of phosphorylation varies throughout the cell cycle, and is highest at the G2/M transition. Becomes hyperphosphorylated in response to cell differentiation and interaction with HES1 or RUNX1. Ubiquitinated by XIAP/BIRC4. In all tissues examined, mostly in brain, liver and muscle.

It localises to the nucleus. In terms of biological role, transcriptional corepressor that binds to a number of transcription factors. Inhibits NF-kappa-B-regulated gene expression. Inhibits the transcriptional activation mediated by FOXA2, and by CTNNB1 and TCF family members in Wnt signaling. Enhances FOXG1/BF-1- and HES1-mediated transcriptional repression. The effects of full-length TLE family members may be modulated by association with dominant-negative AES. Unusual function as coactivator for ESRRG. In Homo sapiens (Human), this protein is Transducin-like enhancer protein 1 (TLE1).